The following is a 219-amino-acid chain: MAEHIIVTLDGPAGVGKTTLARNIAEELGIAYMDTGAMFRSIGWKLGNVVESVPPAEIEKKLAGFRFSLSGAGAATQLSLNGTPVGDEIRTEEVALLASAVATLPVVRTFLKKTQQKLGSEVSLVAEGRDMGTVIFPAARYKFFLDATPEERARRRYEQLTAAGETPDLKALTDQIRKRDHQDRSRVVAPLRPADDAIIIDTTELDVQGVFAAIMSKLK.

11–19 (GPAGVGKTT) provides a ligand contact to ATP.

It belongs to the cytidylate kinase family. Type 1 subfamily.

Its subcellular location is the cytoplasm. It catalyses the reaction CMP + ATP = CDP + ADP. The catalysed reaction is dCMP + ATP = dCDP + ADP. The protein is Cytidylate kinase of Oleidesulfovibrio alaskensis (strain ATCC BAA-1058 / DSM 17464 / G20) (Desulfovibrio alaskensis).